Consider the following 302-residue polypeptide: uncharacterized protein (302 aa).

2 disordered regions span residues 1 to 167 (MPCR…QSSE) and 180 to 199 (PSLC…QRAS). The segment covering 39-54 (EESHAPSRDPRDHQGS) has biased composition (basic and acidic residues). 2 stretches are compositionally biased toward polar residues: residues 123–133 (LSTSSCASVSR) and 183–197 (CPSQ…SPQR).

This is an uncharacterized protein from Homo sapiens (Human).